Reading from the N-terminus, the 760-residue chain is Leucine-rich repeat extensin-like protein 3 (760 aa).

An N-terminal signal peptide occupies residues 1-20 (MKKTIQILLFFFFLINLTNA). A glycan (N-linked (GlcNAc...) asparagine) is linked at asparagine 16. Residues 21–45 (LSISSDGGVLSDNEVRHIQRRQLLE) form an LRR 1 repeat. Asparagine 86 and asparagine 98 each carry an N-linked (GlcNAc...) asparagine glycan. LRR repeat units follow at residues 113–137 (IRTV…LGLL), 138–160 (SDLA…RFNR), 161–185 (LKLL…VLQL), 186–209 (PSLK…LFSK), 211–232 (LDAI…FGDS), 234–255 (VSVI…LVEM), 256–279 (KNLN…IGRL), 281–303 (NVTV…VGEM), and 304–327 (VSVE…ICQL). Asparagine 281 carries N-linked (GlcNAc...) asparagine glycosylation. A glycan (N-linked (GlcNAc...) asparagine) is linked at asparagine 332. Disordered regions lie at residues 389 to 502 (GRSV…PPPP), 515 to 610 (PPVY…YSPP), and 663 to 748 (PPPP…PVIG). Pro residues-rich tracts occupy residues 394-415 (PRPP…PPAP) and 423-502 (LTSP…PPPP). Positions 409-758 (SPPPPAPIFS…VSYASPPPPP (350 aa)) are contains the Ser-Pro(4) repeats. Residues 663–745 (PPPPVHYSSP…SPEYEGPLPP (83 aa)) show a composition bias toward pro residues.

Interacts with SH3P1. In terms of processing, hydroxylated on proline residues in the S-P-P-P-P repeat. O-glycosylated on hydroxyprolines. As to expression, expressed in roots, stems, leaves and flowers, mostly in vascular tissues.

Its subcellular location is the secreted. The protein resides in the cell wall. Its function is as follows. Modulates cell morphogenesis by regulating cell wall formation and assembly, and/or growth polarization. This chain is Leucine-rich repeat extensin-like protein 3 (LRX3), found in Arabidopsis thaliana (Mouse-ear cress).